Consider the following 693-residue polypeptide: Elongation factor G (693 aa).

Positions 8–283 (NKVRNFGIAA…AVCDYLPSPL (276 aa)) constitute a tr-type G domain. GTP-binding positions include 17 to 24 (AHIDAGKT), 81 to 85 (DTPGH), and 135 to 138 (NKMD).

The protein belongs to the TRAFAC class translation factor GTPase superfamily. Classic translation factor GTPase family. EF-G/EF-2 subfamily.

It localises to the cytoplasm. Functionally, catalyzes the GTP-dependent ribosomal translocation step during translation elongation. During this step, the ribosome changes from the pre-translocational (PRE) to the post-translocational (POST) state as the newly formed A-site-bound peptidyl-tRNA and P-site-bound deacylated tRNA move to the P and E sites, respectively. Catalyzes the coordinated movement of the two tRNA molecules, the mRNA and conformational changes in the ribosome. In Endomicrobium trichonymphae, this protein is Elongation factor G.